The sequence spans 740 residues: Isocitrate dehydrogenase [NADP] 2 (740 aa).

NADP(+) is bound by residues Asn83 and Ser85. Residues Ser130, Asn133, Arg137, Arg143, and Lys253 each contribute to the D-threo-isocitrate site. Asn133 serves as a coordination point for NADP(+). Position 348 (Asp348) interacts with Mg(2+). Positions 418 and 546 each coordinate D-threo-isocitrate. Mg(2+)-binding residues include Asp547 and Asp551. NADP(+)-binding residues include Ser584, His588, Arg599, Asp601, and Arg648.

Belongs to the monomeric-type IDH family. Monomer. Mg(2+) serves as cofactor. The cofactor is Mn(2+).

It carries out the reaction D-threo-isocitrate + NADP(+) = 2-oxoglutarate + CO2 + NADPH. Its activity is regulated as follows. IDH activity is not significantly affected by monovalent cations. The combined addition of Mn(2+) and another divalent cation results in the decrease of the activity. Functionally, catalyzes the oxidative decarboxylation of isocitrate to 2-oxoglutarate and carbon dioxide with the concomitant reduction of NADP(+). Cannot use NAD(+). The chain is Isocitrate dehydrogenase [NADP] 2 from Psychrobacter sp. (strain 13A).